A 710-amino-acid polypeptide reads, in one-letter code: Proline-rich receptor-like protein kinase PERK13 (710 aa).

Residues 1–229 (MSDSPTSSPP…SVPPPANSGG (229 aa)) form a disordered region. The Extracellular portion of the chain corresponds to 1–235 (MSDSPTSSPP…NSGGGYQGKT (235 aa)). Composition is skewed to pro residues over residues 7–21 (SSPPAPSADSAPPPD), 29–130 (APPP…PPPP), 137–151 (PPAPPPPEQLPPPAS), and 168–188 (ATSPPAPSAPATSPPAPPNAP). N-linked (GlcNAc...) asparagine glycosylation occurs at N191. Residues 209 to 220 (SPSRGVPSSGNS) show a composition bias toward low complexity. Residues 236 to 256 (MAGFAIAGFAVIALMAVVFLV) traverse the membrane as a helical segment. The Cytoplasmic portion of the chain corresponds to 257–710 (RRKKKRNIDA…ENRNFNNRRY (454 aa)). The disordered stretch occupies residues 289–334 (QNPTKGYSGPGGYNSQQQSNSGNSFGSQRGGGGYTRSGSAPDSAVM). Residues 301 to 315 (YNSQQQSNSGNSFGS) are compositionally biased toward low complexity. T342 bears the Phosphothreonine mark. One can recognise a Protein kinase domain in the interval 353–619 (FSKHNILGEG…RHSGPKRPRM (267 aa)). Residues 359-367 (LGEGGFGCV) and K381 contribute to the ATP site. Residue Y426 is modified to Phosphotyrosine. D477 acts as the Proton acceptor in catalysis. Residue S510 is modified to Phosphoserine. Phosphothreonine is present on residues T511 and T516. The residue at position 524 (Y524) is a Phosphotyrosine. Positions 676–710 (SGDYSVQDSRKGSNGASSEFTRNETENRNFNNRRY) are disordered.

This sequence belongs to the protein kinase superfamily. Ser/Thr protein kinase family. In terms of assembly, interacts with KIPK1 and KIPK2 (via its cytosolic domain). In terms of tissue distribution, mostly expressed in roots, especially in root hairs.

The protein resides in the cell membrane. The catalysed reaction is L-seryl-[protein] + ATP = O-phospho-L-seryl-[protein] + ADP + H(+). It catalyses the reaction L-threonyl-[protein] + ATP = O-phospho-L-threonyl-[protein] + ADP + H(+). Its function is as follows. Negatively regulates root hair elongation. The polypeptide is Proline-rich receptor-like protein kinase PERK13 (PERK13) (Arabidopsis thaliana (Mouse-ear cress)).